Here is a 475-residue protein sequence, read N- to C-terminus: Pup--protein ligase (475 aa).

E19 is a binding site for Mg(2+). R64 is a binding site for ATP. Residue Y66 coordinates Mg(2+). D68 (proton acceptor) is an active-site residue. E74 contacts Mg(2+). Residues T77 and W436 each contribute to the ATP site.

It belongs to the Pup ligase/Pup deamidase family. Pup-conjugating enzyme subfamily.

It catalyses the reaction ATP + [prokaryotic ubiquitin-like protein]-L-glutamate + [protein]-L-lysine = ADP + phosphate + N(6)-([prokaryotic ubiquitin-like protein]-gamma-L-glutamyl)-[protein]-L-lysine.. It functions in the pathway protein degradation; proteasomal Pup-dependent pathway. Its pathway is protein modification; protein pupylation. Its function is as follows. Catalyzes the covalent attachment of the prokaryotic ubiquitin-like protein modifier Pup to the proteasomal substrate proteins, thereby targeting them for proteasomal degradation. This tagging system is termed pupylation. The ligation reaction involves the side-chain carboxylate of the C-terminal glutamate of Pup and the side-chain amino group of a substrate lysine. The chain is Pup--protein ligase from Corynebacterium aurimucosum (strain ATCC 700975 / DSM 44827 / CIP 107346 / CN-1) (Corynebacterium nigricans).